The sequence spans 178 residues: ATP synthase subunit delta (178 aa).

Belongs to the ATPase delta chain family. F-type ATPases have 2 components, F(1) - the catalytic core - and F(0) - the membrane proton channel. F(1) has five subunits: alpha(3), beta(3), gamma(1), delta(1), epsilon(1). F(0) has three main subunits: a(1), b(2) and c(10-14). The alpha and beta chains form an alternating ring which encloses part of the gamma chain. F(1) is attached to F(0) by a central stalk formed by the gamma and epsilon chains, while a peripheral stalk is formed by the delta and b chains.

Its subcellular location is the cell inner membrane. F(1)F(0) ATP synthase produces ATP from ADP in the presence of a proton or sodium gradient. F-type ATPases consist of two structural domains, F(1) containing the extramembraneous catalytic core and F(0) containing the membrane proton channel, linked together by a central stalk and a peripheral stalk. During catalysis, ATP synthesis in the catalytic domain of F(1) is coupled via a rotary mechanism of the central stalk subunits to proton translocation. Its function is as follows. This protein is part of the stalk that links CF(0) to CF(1). It either transmits conformational changes from CF(0) to CF(1) or is implicated in proton conduction. The sequence is that of ATP synthase subunit delta from Pseudomonas fluorescens (strain ATCC BAA-477 / NRRL B-23932 / Pf-5).